Here is a 280-residue protein sequence, read N- to C-terminus: 2-dehydro-3-deoxyphosphooctonate aldolase (280 aa).

It belongs to the KdsA family.

The protein localises to the cytoplasm. The enzyme catalyses D-arabinose 5-phosphate + phosphoenolpyruvate + H2O = 3-deoxy-alpha-D-manno-2-octulosonate-8-phosphate + phosphate. The protein operates within carbohydrate biosynthesis; 3-deoxy-D-manno-octulosonate biosynthesis; 3-deoxy-D-manno-octulosonate from D-ribulose 5-phosphate: step 2/3. It participates in bacterial outer membrane biogenesis; lipopolysaccharide biosynthesis. This is 2-dehydro-3-deoxyphosphooctonate aldolase from Coxiella burnetii (strain CbuK_Q154) (Coxiella burnetii (strain Q154)).